Reading from the N-terminus, the 338-residue chain is Lipoate-protein ligase A (338 aa).

One can recognise a BPL/LPL catalytic domain in the interval 29–216 (SPNQRVLFLW…AFFAYYDEQV (188 aa)). ATP-binding positions include Arg71, 76-79 (GAVF), and Lys134. Lys134 contributes to the (R)-lipoate binding site.

Belongs to the LplA family. Monomer.

It is found in the cytoplasm. The enzyme catalyses L-lysyl-[lipoyl-carrier protein] + (R)-lipoate + ATP = N(6)-[(R)-lipoyl]-L-lysyl-[lipoyl-carrier protein] + AMP + diphosphate + H(+). It participates in protein modification; protein lipoylation via exogenous pathway; protein N(6)-(lipoyl)lysine from lipoate: step 1/2. It functions in the pathway protein modification; protein lipoylation via exogenous pathway; protein N(6)-(lipoyl)lysine from lipoate: step 2/2. Functionally, catalyzes both the ATP-dependent activation of exogenously supplied lipoate to lipoyl-AMP and the transfer of the activated lipoyl onto the lipoyl domains of lipoate-dependent enzymes. In Yersinia pseudotuberculosis serotype O:1b (strain IP 31758), this protein is Lipoate-protein ligase A.